We begin with the raw amino-acid sequence, 61 residues long: Small ribosomal subunit protein uS14 (61 aa).

Residues Cys-24, Cys-27, Cys-40, and Cys-43 each contribute to the Zn(2+) site.

The protein belongs to the universal ribosomal protein uS14 family. Zinc-binding uS14 subfamily. As to quaternary structure, part of the 30S ribosomal subunit. Contacts proteins S3 and S10. Zn(2+) is required as a cofactor.

In terms of biological role, binds 16S rRNA, required for the assembly of 30S particles and may also be responsible for determining the conformation of the 16S rRNA at the A site. This is Small ribosomal subunit protein uS14 from Rhodopirellula baltica (strain DSM 10527 / NCIMB 13988 / SH1).